Consider the following 240-residue polypeptide: Keratinocyte-associated protein 3 (240 aa).

The next 4 helical transmembrane spans lie at 21–41 (VGLA…VLHG), 63–83 (VISV…LLAS), 95–115 (LLAL…GLLL), and 163–183 (ALAL…LSGY).

It belongs to the TMEM54 family.

Its subcellular location is the membrane. This is Keratinocyte-associated protein 3 (KRTCAP3) from Bos taurus (Bovine).